A 159-amino-acid chain; its full sequence is Cytochrome c-type biogenesis protein CcmE (159 aa).

The Cytoplasmic segment spans residues 1 to 8 (MNIRRKNR). Residues 9 to 29 (LWIACAVLAGLALTIGLVLYA) traverse the membrane as a helical; Signal-anchor for type II membrane protein segment. The Periplasmic segment spans residues 30–159 (LRSNIDLFYT…PASVYKDPAS (130 aa)). Heme is bound by residues histidine 130 and tyrosine 134. Basic and acidic residues predominate over residues 134 to 147 (YTPPEVEKAMEANH). The disordered stretch occupies residues 134-159 (YTPPEVEKAMEANHRRPASVYKDPAS).

It belongs to the CcmE/CycJ family.

It localises to the cell inner membrane. In terms of biological role, heme chaperone required for the biogenesis of c-type cytochromes. Transiently binds heme delivered by CcmC and transfers the heme to apo-cytochromes in a process facilitated by CcmF and CcmH. The protein is Cytochrome c-type biogenesis protein CcmE of Escherichia coli (strain SMS-3-5 / SECEC).